A 177-amino-acid chain; its full sequence is Large ribosomal subunit protein uL6 (177 aa).

Belongs to the universal ribosomal protein uL6 family. Part of the 50S ribosomal subunit.

Its function is as follows. This protein binds to the 23S rRNA, and is important in its secondary structure. It is located near the subunit interface in the base of the L7/L12 stalk, and near the tRNA binding site of the peptidyltransferase center. This chain is Large ribosomal subunit protein uL6, found in Aeromonas hydrophila subsp. hydrophila (strain ATCC 7966 / DSM 30187 / BCRC 13018 / CCUG 14551 / JCM 1027 / KCTC 2358 / NCIMB 9240 / NCTC 8049).